A 181-amino-acid chain; its full sequence is Adenine phosphoribosyltransferase (181 aa).

It belongs to the purine/pyrimidine phosphoribosyltransferase family. Homodimer.

The protein localises to the cytoplasm. The enzyme catalyses AMP + diphosphate = 5-phospho-alpha-D-ribose 1-diphosphate + adenine. It functions in the pathway purine metabolism; AMP biosynthesis via salvage pathway; AMP from adenine: step 1/1. Functionally, catalyzes a salvage reaction resulting in the formation of AMP, that is energically less costly than de novo synthesis. The sequence is that of Adenine phosphoribosyltransferase from Mesorhizobium japonicum (strain LMG 29417 / CECT 9101 / MAFF 303099) (Mesorhizobium loti (strain MAFF 303099)).